Consider the following 177-residue polypeptide: Ribosome maturation factor RimM (177 aa).

A PRC barrel domain is found at 96–177; the sequence is DNEFYWVDLI…KITVDWGLDY (82 aa).

The protein belongs to the RimM family. In terms of assembly, binds ribosomal protein uS19.

Its subcellular location is the cytoplasm. Functionally, an accessory protein needed during the final step in the assembly of 30S ribosomal subunit, possibly for assembly of the head region. Essential for efficient processing of 16S rRNA. May be needed both before and after RbfA during the maturation of 16S rRNA. It has affinity for free ribosomal 30S subunits but not for 70S ribosomes. The chain is Ribosome maturation factor RimM from Herminiimonas arsenicoxydans.